The sequence spans 339 residues: Undecaprenyl-phosphate 4-deoxy-4-formamido-L-arabinose transferase (339 aa).

Transmembrane regions (helical) follow at residues Leu235–Val255 and Phe270–Leu290.

It belongs to the glycosyltransferase 2 family.

It is found in the cell inner membrane. The enzyme catalyses UDP-4-deoxy-4-formamido-beta-L-arabinose + di-trans,octa-cis-undecaprenyl phosphate = 4-deoxy-4-formamido-alpha-L-arabinopyranosyl di-trans,octa-cis-undecaprenyl phosphate + UDP. Its pathway is glycolipid biosynthesis; 4-amino-4-deoxy-alpha-L-arabinose undecaprenyl phosphate biosynthesis; 4-amino-4-deoxy-alpha-L-arabinose undecaprenyl phosphate from UDP-4-deoxy-4-formamido-beta-L-arabinose and undecaprenyl phosphate: step 1/2. It functions in the pathway bacterial outer membrane biogenesis; lipopolysaccharide biosynthesis. Its function is as follows. Catalyzes the transfer of 4-deoxy-4-formamido-L-arabinose from UDP to undecaprenyl phosphate. The modified arabinose is attached to lipid A and is required for resistance to polymyxin and cationic antimicrobial peptides. This is Undecaprenyl-phosphate 4-deoxy-4-formamido-L-arabinose transferase from Pseudomonas fluorescens (strain ATCC BAA-477 / NRRL B-23932 / Pf-5).